The chain runs to 287 residues: HTH-type transcriptional regulator MurR (287 aa).

In terms of domain architecture, HTH rpiR-type spans 1-77 (MLYLAKMRNA…MALIEEHSVS (77 aa)). The H-T-H motif DNA-binding region spans 37-56 (SRNMAKQLEISQSSIVKFAQ). One can recognise an SIS domain in the interval 128 to 268 (VINLISKAPL…FVGMVQLNDV (141 aa)).

Homotetramer.

Its pathway is amino-sugar metabolism; N-acetylmuramate degradation [regulation]. Represses the expression of the murPQ operon involved in the uptake and degradation of N-acetylmuramic acid (MurNAc). Binds to two adjacent inverted repeats within the operator region. MurNAc 6-phosphate, the substrate of MurQ, is the specific inducer that weakens binding of MurR to the operator. The chain is HTH-type transcriptional regulator MurR from Salmonella arizonae (strain ATCC BAA-731 / CDC346-86 / RSK2980).